Consider the following 336-residue polypeptide: Aspartate--ammonia ligase (336 aa).

The protein belongs to the class-II aminoacyl-tRNA synthetase family. AsnA subfamily.

Its subcellular location is the cytoplasm. It catalyses the reaction L-aspartate + NH4(+) + ATP = L-asparagine + AMP + diphosphate + H(+). It functions in the pathway amino-acid biosynthesis; L-asparagine biosynthesis; L-asparagine from L-aspartate (ammonia route): step 1/1. The polypeptide is Aspartate--ammonia ligase (Clostridium perfringens (strain ATCC 13124 / DSM 756 / JCM 1290 / NCIMB 6125 / NCTC 8237 / Type A)).